A 232-amino-acid chain; its full sequence is MDDSNDSSSAGPDGRLHAVDPSLTERQRTILNVIRSSVTSRGYPPSIREIGDAVGLTSTSSVAHQLRTLERKGYLRRDPNRPRAVDVRGVDDDVAAPATEVAGSDALPEPTFVPVLGRIAAGGPILAEEAVEDVFPLPRELVGDGTLFLLKVVGDSMVEAAICDGDWVVVRQQHVADNADIVAAMIDGEATVKTFKRAGGQVWLMPHNPAFDPIPGNDATVLGKVVTVIRKV.

Polar residues predominate over residues 1–10 (MDDSNDSSSA). Residues 1–22 (MDDSNDSSSAGPDGRLHAVDPS) are disordered. The segment at residues 47-67 (IREIGDAVGLTSTSSVAHQLR) is a DNA-binding region (H-T-H motif). Catalysis depends on for autocatalytic cleavage activity residues serine 156 and lysine 193.

Belongs to the peptidase S24 family. As to quaternary structure, homodimer.

It carries out the reaction Hydrolysis of Ala-|-Gly bond in repressor LexA.. Functionally, represses a number of genes involved in the response to DNA damage (SOS response), including recA and lexA. In the presence of single-stranded DNA, RecA interacts with LexA causing an autocatalytic cleavage which disrupts the DNA-binding part of LexA, leading to derepression of the SOS regulon and eventually DNA repair. The protein is LexA repressor of Mycolicibacterium paratuberculosis (strain ATCC BAA-968 / K-10) (Mycobacterium paratuberculosis).